The primary structure comprises 86 residues: YcgL domain-containing protein XC_4086 (86 aa).

Residues 1–83 (MHAYVYKSQR…PKTVVLAGEC (83 aa)) form the YcgL domain.

This Xanthomonas campestris pv. campestris (strain 8004) protein is YcgL domain-containing protein XC_4086.